Consider the following 133-residue polypeptide: p53 and DNA damage-regulated protein 1 (133 aa).

Belongs to the prefoldin subunit beta family. As to quaternary structure, component of the PAQosome complex which is responsible for the biogenesis of several protein complexes and which consists of R2TP complex members RUVBL1, RUVBL2, RPAP3 and PIH1D1, URI complex members PFDN2, PFDN6, PDRG1, UXT and URI1 as well as ASDURF, POLR2E and DNAAF10/WDR92.

The protein resides in the cytoplasm. In terms of biological role, may play a role in chaperone-mediated protein folding. The polypeptide is p53 and DNA damage-regulated protein 1 (Pdrg1) (Mus musculus (Mouse)).